A 371-amino-acid polypeptide reads, in one-letter code: Cytochrome b (371 aa).

The next 4 membrane-spanning stretches (helical) occupy residues 25-45 (FGSMLLTCLALQVLTGFFLAV), 69-90 (WMMQNLHAIGASMFFICIYIHI), 105-125 (WMSGITLLITLMATAFFGYVL), and 170-190 (FFALHFILPFAIISLSSLHVI). Positions 75 and 89 each coordinate heme b. Histidine 174 and histidine 188 together coordinate heme b. An a ubiquinone-binding site is contributed by histidine 193. 4 helical membrane-spanning segments follow: residues 218-238 (HKDLLLLTLMMMFLFIIVSFF), 280-300 (LGGALALVMSIMILFCTPFTH), 312-332 (LSQLMFWTLVSTFITITWAAT), and 339-358 (FITISQVTSILYFTFFLSIP).

This sequence belongs to the cytochrome b family. In terms of assembly, the cytochrome bc1 complex contains 3 respiratory subunits (MT-CYB, CYC1 and UQCRFS1), 2 core proteins (UQCRC1 and UQCRC2) and probably 6 low-molecular weight proteins. It depends on heme b as a cofactor.

It localises to the mitochondrion inner membrane. Component of the ubiquinol-cytochrome c reductase complex (complex III or cytochrome b-c1 complex) that is part of the mitochondrial respiratory chain. The b-c1 complex mediates electron transfer from ubiquinol to cytochrome c. Contributes to the generation of a proton gradient across the mitochondrial membrane that is then used for ATP synthesis. The polypeptide is Cytochrome b (MT-CYB) (Liasis mackloti savuensis (Savu python)).